Here is a 142-residue protein sequence, read N- to C-terminus: Fusaric acid resistance protein FusB (142 aa).

The segment at 73–142 is disordered; the sequence is AAPCSRKAST…ASCSPAIRPR (70 aa). The segment covering 81 to 142 has biased composition (low complexity); that stretch reads STGSPARSSG…ASCSPAIRPR (62 aa).

Functionally, involved in the resistance (detoxification) of the fungal toxin fusaric acid. The polypeptide is Fusaric acid resistance protein FusB (fusB) (Burkholderia cepacia (Pseudomonas cepacia)).